Here is a 394-residue protein sequence, read N- to C-terminus: Elongation factor Tu 2 (394 aa).

The 195-residue stretch at 10–204 (KPHVNVGTIG…FLDSYIPEPE (195 aa)) folds into the tr-type G domain. The tract at residues 19–26 (GHVDHGKT) is G1. 19 to 26 (GHVDHGKT) provides a ligand contact to GTP. T26 is a Mg(2+) binding site. The G2 stretch occupies residues 60–64 (GITIN). Residues 81–84 (DCPG) form a G3 region. GTP contacts are provided by residues 81-85 (DCPGH) and 136-139 (NKCD). The tract at residues 136–139 (NKCD) is G4. The interval 174 to 176 (SAL) is G5.

Belongs to the TRAFAC class translation factor GTPase superfamily. Classic translation factor GTPase family. EF-Tu/EF-1A subfamily. As to quaternary structure, monomer.

It is found in the cytoplasm. The catalysed reaction is GTP + H2O = GDP + phosphate + H(+). Its function is as follows. GTP hydrolase that promotes the GTP-dependent binding of aminoacyl-tRNA to the A-site of ribosomes during protein biosynthesis. The chain is Elongation factor Tu 2 from Escherichia coli O139:H28 (strain E24377A / ETEC).